A 229-amino-acid polypeptide reads, in one-letter code: RNA pyrophosphohydrolase (229 aa).

One can recognise a Nudix hydrolase domain in the interval 6-149 (GFRPNVGIIL…KRGVYEMALT (144 aa)). The short motif at 38 to 59 (GGIDRGETPEQAMFRELHEEVG) is the Nudix box element. The segment at 191-229 (KPGMELPPGASFDPDPQNSVPAPLEALPTLPVPKKPLDA) is disordered. Pro residues predominate over residues 220–229 (LPVPKKPLDA).

Belongs to the Nudix hydrolase family. RppH subfamily. A divalent metal cation is required as a cofactor.

Accelerates the degradation of transcripts by removing pyrophosphate from the 5'-end of triphosphorylated RNA, leading to a more labile monophosphorylated state that can stimulate subsequent ribonuclease cleavage. The protein is RNA pyrophosphohydrolase of Acidovorax ebreus (strain TPSY) (Diaphorobacter sp. (strain TPSY)).